The following is a 159-amino-acid chain: Ribosomal RNA large subunit methyltransferase H (159 aa).

Residues Leu76, Gly108, and 127–132 (FGQLTL) each bind S-adenosyl-L-methionine.

Belongs to the RNA methyltransferase RlmH family. In terms of assembly, homodimer.

Its subcellular location is the cytoplasm. The catalysed reaction is pseudouridine(1915) in 23S rRNA + S-adenosyl-L-methionine = N(3)-methylpseudouridine(1915) in 23S rRNA + S-adenosyl-L-homocysteine + H(+). Specifically methylates the pseudouridine at position 1915 (m3Psi1915) in 23S rRNA. The protein is Ribosomal RNA large subunit methyltransferase H of Streptococcus suis (strain 05ZYH33).